The sequence spans 315 residues: Homoserine O-succinyltransferase (315 aa).

The active-site Acyl-thioester intermediate is the C142. 2 residues coordinate substrate: K163 and S192. H235 (proton acceptor) is an active-site residue. E237 is an active-site residue. R249 is a substrate binding site. Residues 249-258 (RDCEKSDNAP) show a composition bias toward basic and acidic residues. A disordered region spans residues 249-271 (RDCEKSDNAPKPENYFPDDDATK).

It belongs to the MetA family.

The protein resides in the cytoplasm. The enzyme catalyses L-homoserine + succinyl-CoA = O-succinyl-L-homoserine + CoA. It participates in amino-acid biosynthesis; L-methionine biosynthesis via de novo pathway; O-succinyl-L-homoserine from L-homoserine: step 1/1. Transfers a succinyl group from succinyl-CoA to L-homoserine, forming succinyl-L-homoserine. The polypeptide is Homoserine O-succinyltransferase (Pseudoalteromonas translucida (strain TAC 125)).